The chain runs to 474 residues: Serine--tRNA ligase (474 aa).

278-280 is an L-serine binding site; it reads TAE. 309-311 serves as a coordination point for ATP; the sequence is RSE. Position 332 (glutamate 332) interacts with L-serine. ATP is bound at residue 396–399; sequence EISS. Serine 432 provides a ligand contact to L-serine.

It belongs to the class-II aminoacyl-tRNA synthetase family. Type-1 seryl-tRNA synthetase subfamily. Homodimer. The tRNA molecule binds across the dimer.

It localises to the cytoplasm. The enzyme catalyses tRNA(Ser) + L-serine + ATP = L-seryl-tRNA(Ser) + AMP + diphosphate + H(+). The catalysed reaction is tRNA(Sec) + L-serine + ATP = L-seryl-tRNA(Sec) + AMP + diphosphate + H(+). Its pathway is aminoacyl-tRNA biosynthesis; selenocysteinyl-tRNA(Sec) biosynthesis; L-seryl-tRNA(Sec) from L-serine and tRNA(Sec): step 1/1. Functionally, catalyzes the attachment of serine to tRNA(Ser). Is also able to aminoacylate tRNA(Sec) with serine, to form the misacylated tRNA L-seryl-tRNA(Sec), which will be further converted into selenocysteinyl-tRNA(Sec). The chain is Serine--tRNA ligase from Caulobacter sp. (strain K31).